A 242-amino-acid chain; its full sequence is Ras-like protein family member 11A (242 aa).

The segment at 17 to 241 (ESSSDYLLPK…SPKVKAPSAL (225 aa)) is small GTPase-like. GTP-binding positions include 34–41 (GAGRVGKS), 81–85 (DTPGG), and 147–150 (NKGD).

The protein belongs to the small GTPase superfamily. Ras family. In terms of assembly, interacts with UBF/UBTF. Widely expressed. Down-regulated in prostate tumors compared to normal prostate tissue. High levels found in colon tumor and normal colon tissue followed by small intestine, liver, jejunum, ileum, bladder and aorta. Lowest levels observed in endothelial cells.

It localises to the nucleus. Its subcellular location is the nucleolus. The catalysed reaction is GTP + H2O = GDP + phosphate + H(+). Functionally, regulator of rDNA transcription. Acts in cooperation UBF/UBTF and positively regulates RNA polymerase I transcription. The protein is Ras-like protein family member 11A of Homo sapiens (Human).